The following is a 117-amino-acid chain: Large ribosomal subunit protein bL20c (117 aa).

Belongs to the bacterial ribosomal protein bL20 family.

The protein resides in the plastid. The protein localises to the chloroplast. Binds directly to 23S ribosomal RNA and is necessary for the in vitro assembly process of the 50S ribosomal subunit. It is not involved in the protein synthesizing functions of that subunit. The polypeptide is Large ribosomal subunit protein bL20c (Gossypium hirsutum (Upland cotton)).